The sequence spans 247 residues: ATP synthase subunit a, chloroplastic (247 aa).

5 helical membrane-spanning segments follow: residues 38–58 (QVLI…AIAV), 95–115 (VPFI…GALL), 134–154 (INTT…AGLT), 199–219 (LVVV…VMFL), and 220–240 (GLFT…AYIG).

The protein belongs to the ATPase A chain family. As to quaternary structure, F-type ATPases have 2 components, CF(1) - the catalytic core - and CF(0) - the membrane proton channel. CF(1) has five subunits: alpha(3), beta(3), gamma(1), delta(1), epsilon(1). CF(0) has four main subunits: a, b, b' and c.

It is found in the plastid. The protein resides in the chloroplast thylakoid membrane. Key component of the proton channel; it plays a direct role in the translocation of protons across the membrane. This is ATP synthase subunit a, chloroplastic from Ceratophyllum demersum (Rigid hornwort).